Consider the following 350-residue polypeptide: Uroporphyrinogen decarboxylase (350 aa).

Substrate-binding positions include 28-32 (RQAGR), aspartate 78, tyrosine 155, serine 210, and histidine 325.

It belongs to the uroporphyrinogen decarboxylase family. Homodimer.

Its subcellular location is the cytoplasm. The enzyme catalyses uroporphyrinogen III + 4 H(+) = coproporphyrinogen III + 4 CO2. It functions in the pathway porphyrin-containing compound metabolism; protoporphyrin-IX biosynthesis; coproporphyrinogen-III from 5-aminolevulinate: step 4/4. In terms of biological role, catalyzes the decarboxylation of four acetate groups of uroporphyrinogen-III to yield coproporphyrinogen-III. The polypeptide is Uroporphyrinogen decarboxylase (Trichormus variabilis (strain ATCC 29413 / PCC 7937) (Anabaena variabilis)).